Reading from the N-terminus, the 341-residue chain is Protein-glutamate methylesterase/protein-glutamine glutaminase 1 (341 aa).

Positions 2 to 119 (KVGIVNDSAL…SDAKLTAGPL (118 aa)) constitute a Response regulatory domain. Asp53 is subject to 4-aspartylphosphate. The CheB-type methylesterase domain maps to 146 to 331 (TLAASRLVAI…LTAIAPRLVQ (186 aa)). Residues Ser158, His185, and Asp278 contribute to the active site.

Belongs to the CheB family. Post-translationally, phosphorylated by CheA. Phosphorylation of the N-terminal regulatory domain activates the methylesterase activity.

It is found in the cytoplasm. It carries out the reaction [protein]-L-glutamate 5-O-methyl ester + H2O = L-glutamyl-[protein] + methanol + H(+). The catalysed reaction is L-glutaminyl-[protein] + H2O = L-glutamyl-[protein] + NH4(+). Involved in chemotaxis. Part of a chemotaxis signal transduction system that modulates chemotaxis in response to various stimuli. Catalyzes the demethylation of specific methylglutamate residues introduced into the chemoreceptors (methyl-accepting chemotaxis proteins or MCP) by CheR. Also mediates the irreversible deamidation of specific glutamine residues to glutamic acid. This Cupriavidus pinatubonensis (strain JMP 134 / LMG 1197) (Cupriavidus necator (strain JMP 134)) protein is Protein-glutamate methylesterase/protein-glutamine glutaminase 1.